The following is a 287-amino-acid chain: Vesicle-associated protein 4-3 (287 aa).

Residues 1-14 (MALTEDKSDSDGRR) show a composition bias toward basic and acidic residues. A disordered region spans residues 1–45 (MALTEDKSDSDGRRWGKFKLPFRNSNSQAPSASSSSSMATSSSSV). Low complexity predominate over residues 25-45 (SNSQAPSASSSSSMATSSSSV). The MSP domain occupies 99–221 (RLKLDPSAKL…EEQVMRVVFL (123 aa)).

The protein belongs to the VAMP-associated protein (VAP) (TC 9.B.17) family.

May play a role in vesicle trafficking. This chain is Vesicle-associated protein 4-3 (PVA43), found in Arabidopsis thaliana (Mouse-ear cress).